Consider the following 97-residue polypeptide: Exodeoxyribonuclease 7 small subunit (97 aa).

Positions 1–22 (MAKTASPGATPPGNGTEPLPDN) are disordered.

It belongs to the XseB family. As to quaternary structure, heterooligomer composed of large and small subunits.

The protein localises to the cytoplasm. It catalyses the reaction Exonucleolytic cleavage in either 5'- to 3'- or 3'- to 5'-direction to yield nucleoside 5'-phosphates.. In terms of biological role, bidirectionally degrades single-stranded DNA into large acid-insoluble oligonucleotides, which are then degraded further into small acid-soluble oligonucleotides. The protein is Exodeoxyribonuclease 7 small subunit of Burkholderia cenocepacia (strain HI2424).